A 2241-amino-acid polypeptide reads, in one-letter code: Large tegument protein deneddylase (2241 aa).

A deubiquitination activity region spans residues 1–238 (MKVTQASCHQ…IDLTGVVRES (238 aa)). Residues 4 to 226 (TQASCHQGDI…AARLVSTYRD (223 aa)) enclose the Peptidase C76 domain. Catalysis depends on residues Cys24, Asp160, and His162. Residues 239 to 314 (ADTAATTTTA…STTSKTLATA (76 aa)) are disordered. The segment covering 240–250 (DTAATTTTAAP) has biased composition (low complexity). A compositionally biased stretch (pro residues) spans 251–268 (SLPPLPDPIVDPGCPPGV). Low complexity predominate over residues 304–314 (PSTTSKTLATA). The tract at residues 327-331 (SSAVP) is interaction with inner tegument protein. Disordered stretches follow at residues 1187–1230 (MTET…PPAD) and 2118–2152 (PIAR…DTSR). Basic and acidic residues-rich tracts occupy residues 1190 to 1199 (TSERLDRSLR) and 2142 to 2152 (QIDHAQDDTSR).

This sequence belongs to the herpesviridae large tegument protein family. As to quaternary structure, interacts with host CUL1 and CUL4A; these interactions inhibit the E3 ligase activity of cullins. Interacts with inner tegument protein. Interacts with capsid vertex specific component CVC2. Interacts with the major capsid protein/MCP.

The protein localises to the virion tegument. The protein resides in the host cytoplasm. Its subcellular location is the host nucleus. It carries out the reaction Thiol-dependent hydrolysis of ester, thioester, amide, peptide and isopeptide bonds formed by the C-terminal Gly of ubiquitin (a 76-residue protein attached to proteins as an intracellular targeting signal).. Its function is as follows. Large tegument protein that plays multiple roles in the viral cycle. During viral entry, remains associated with the capsid while most of the tegument is detached and participates in the capsid transport toward the host nucleus. Plays a role in the routing of the capsid at the nuclear pore complex and subsequent uncoating. Within the host nucleus, acts as a deneddylase and promotes the degradation of nuclear CRLs (cullin-RING ubiquitin ligases) and thereby stabilizes nuclear CRL substrates, while cytoplasmic CRLs remain unaffected. These modifications prevent host cell cycle S-phase progression and create a favorable environment allowing efficient viral genome replication. Participates later in the secondary envelopment of capsids. Indeed, plays a linker role for the association of the outer viral tegument to the capsids together with the inner tegument protein. The polypeptide is Large tegument protein deneddylase (UL48) (Homo sapiens (Human)).